The chain runs to 563 residues: GTPase Obg (563 aa).

An Obg domain is found at 2-168 (SDFVDRVTVH…RDVILELKSI (167 aa)). An OBG-type G domain is found at 169 to 349 (ADVALVGFPS…LNFALSALVH (181 aa)). GTP-binding positions include 175–182 (GFPSAGKS), 200–204 (FTTLV), 221–224 (DVPG), 301–304 (NKID), and 330–332 (STA). Positions 182 and 202 each coordinate Mg(2+). Positions 383–469 (DEGGSALEFT…ARMVEFDWDP (87 aa)) constitute an OCT domain. The disordered stretch occupies residues 529–563 (RKAGHWADPTVDDDRHDETSLFGHGESSEDGETEE).

Belongs to the TRAFAC class OBG-HflX-like GTPase superfamily. OBG GTPase family. Monomer. Requires Mg(2+) as cofactor.

It localises to the cytoplasm. In terms of biological role, an essential GTPase which binds GTP, GDP and possibly (p)ppGpp with moderate affinity, with high nucleotide exchange rates and a fairly low GTP hydrolysis rate. Plays a role in control of the cell cycle, stress response, ribosome biogenesis and in those bacteria that undergo differentiation, in morphogenesis control. The protein is GTPase Obg of Bifidobacterium longum (strain DJO10A).